A 318-amino-acid polypeptide reads, in one-letter code: L-carnitine dehydrogenase (318 aa).

14 to 19 is a binding site for NAD(+); sequence GAGVIG.

Belongs to the 3-hydroxyacyl-CoA dehydrogenase family. L-carnitine dehydrogenase subfamily. In terms of assembly, homodimer.

It is found in the cytoplasm. The enzyme catalyses carnitine + NAD(+) = 3-dehydrocarnitine + NADH + H(+). The protein operates within amine and polyamine metabolism; carnitine metabolism. Its function is as follows. Catalyzes the NAD(+)-dependent oxidation of L-carnitine to 3-dehydrocarnitine. This Streptomyces coelicolor (strain ATCC BAA-471 / A3(2) / M145) protein is L-carnitine dehydrogenase.